The primary structure comprises 232 residues: MIKLLGVFFVPIIPFSFVVDYVFENCKSCRNYFFPVLVLLGVLVGALGVGKAGTLLILLAVLTSIAYTYRLFRVQNYEEWLLTYYIAVASLSWLHPEKMLFFISAFAIPLTVIHFLILHMKNQGAKPEVEEFKGIATYLPVLGTLAFVALVSSLVIAPAYAFFTLYGVFKGNLILTPILLIEWLVWLWVGFKMFSPVFFEEKAEAPKYEDLDFSEVFPLTFLLFLGLLLPVL.

The next 5 helical transmembrane spans lie at 4–24 (LLGV…YVFE), 42–62 (VLVG…LAVL), 100–120 (LFFI…ILHM), 145–165 (LAFV…FFTL), and 171–191 (GNLI…WVGF).

It is found in the cell membrane. This is an uncharacterized protein from Aquifex aeolicus (strain VF5).